The primary structure comprises 344 residues: 4-hydroxy-3-methylbut-2-en-1-yl diphosphate synthase (flavodoxin) (344 aa).

Residues Cys-253, Cys-256, Cys-288, and Glu-295 each coordinate [4Fe-4S] cluster.

It belongs to the IspG family. It depends on [4Fe-4S] cluster as a cofactor.

The enzyme catalyses (2E)-4-hydroxy-3-methylbut-2-enyl diphosphate + oxidized [flavodoxin] + H2O + 2 H(+) = 2-C-methyl-D-erythritol 2,4-cyclic diphosphate + reduced [flavodoxin]. Its pathway is isoprenoid biosynthesis; isopentenyl diphosphate biosynthesis via DXP pathway; isopentenyl diphosphate from 1-deoxy-D-xylulose 5-phosphate: step 5/6. Its function is as follows. Converts 2C-methyl-D-erythritol 2,4-cyclodiphosphate (ME-2,4cPP) into 1-hydroxy-2-methyl-2-(E)-butenyl 4-diphosphate. In Thermotoga maritima (strain ATCC 43589 / DSM 3109 / JCM 10099 / NBRC 100826 / MSB8), this protein is 4-hydroxy-3-methylbut-2-en-1-yl diphosphate synthase (flavodoxin).